The following is a 166-amino-acid chain: Protein SprT (166 aa).

The SprT-like domain maps to 19-164 (REHLAKANLK…CVHCGDLLVA (146 aa)). His-78 is a Zn(2+) binding site. The active site involves Glu-79. His-82 contacts Zn(2+).

This sequence belongs to the SprT family. The cofactor is Zn(2+).

It localises to the cytoplasm. The polypeptide is Protein SprT (Klebsiella pneumoniae (strain 342)).